The primary structure comprises 191 residues: uncharacterized protein (191 aa).

In terms of domain architecture, Fe2OG dioxygenase spans Glu87–Gly184.

This is an uncharacterized protein from Acanthamoeba polyphaga mimivirus (APMV).